A 242-amino-acid chain; its full sequence is NAD(P)H-quinone oxidoreductase subunit K (242 aa).

Residues Cys59, Cys60, Cys124, and Cys155 each contribute to the [4Fe-4S] cluster site.

The protein belongs to the complex I 20 kDa subunit family. NDH-1 can be composed of about 15 different subunits; different subcomplexes with different compositions have been identified which probably have different functions. The cofactor is [4Fe-4S] cluster.

It localises to the cellular thylakoid membrane. The enzyme catalyses a plastoquinone + NADH + (n+1) H(+)(in) = a plastoquinol + NAD(+) + n H(+)(out). The catalysed reaction is a plastoquinone + NADPH + (n+1) H(+)(in) = a plastoquinol + NADP(+) + n H(+)(out). Functionally, NDH-1 shuttles electrons from an unknown electron donor, via FMN and iron-sulfur (Fe-S) centers, to quinones in the respiratory and/or the photosynthetic chain. The immediate electron acceptor for the enzyme in this species is believed to be plastoquinone. Couples the redox reaction to proton translocation, and thus conserves the redox energy in a proton gradient. Cyanobacterial NDH-1 also plays a role in inorganic carbon-concentration. This chain is NAD(P)H-quinone oxidoreductase subunit K, found in Synechococcus sp. (strain RCC307).